A 278-amino-acid polypeptide reads, in one-letter code: Expansin-B17 (278 aa).

Positions 1–26 (MAAASSRSFSLCVLLLLLLLAPPISA) are cleaved as a signal peptide. In terms of domain architecture, Expansin-like EG45 spans 66–176 (GGACGYGSLV…RRTACKYGGK (111 aa)). 3 disulfide bridges follow: cysteine 69-cysteine 98, cysteine 101-cysteine 171, and cysteine 106-cysteine 112. The Expansin-like CBD domain maps to 189–270 (FWLSLLVEFE…NWKPTATYTS (82 aa)).

The protein belongs to the expansin family. Expansin B subfamily.

It is found in the secreted. Its subcellular location is the cell wall. The protein resides in the membrane. Its function is as follows. May cause loosening and extension of plant cell walls by disrupting non-covalent bonding between cellulose microfibrils and matrix glucans. No enzymatic activity has been found. May be required for rapid internodal elongation in deepwater rice during submergence. The protein is Expansin-B17 (EXPB17) of Oryza sativa subsp. japonica (Rice).